Here is a 131-residue protein sequence, read N- to C-terminus: Large ribosomal subunit protein bL17 (131 aa).

It belongs to the bacterial ribosomal protein bL17 family. In terms of assembly, part of the 50S ribosomal subunit. Contacts protein L32.

This is Large ribosomal subunit protein bL17 from Teredinibacter turnerae (strain ATCC 39867 / T7901).